Reading from the N-terminus, the 249-residue chain is Indole-3-glycerol phosphate synthase (249 aa).

It belongs to the TrpC family.

It carries out the reaction 1-(2-carboxyphenylamino)-1-deoxy-D-ribulose 5-phosphate + H(+) = (1S,2R)-1-C-(indol-3-yl)glycerol 3-phosphate + CO2 + H2O. It participates in amino-acid biosynthesis; L-tryptophan biosynthesis; L-tryptophan from chorismate: step 4/5. In Pyrobaculum aerophilum (strain ATCC 51768 / DSM 7523 / JCM 9630 / CIP 104966 / NBRC 100827 / IM2), this protein is Indole-3-glycerol phosphate synthase.